A 347-amino-acid polypeptide reads, in one-letter code: Ribosomal RNA small subunit methyltransferase H (347 aa).

Residues 47–49, D64, F91, D114, and Q121 contribute to the S-adenosyl-L-methionine site; that span reads GGY. Residues 291–347 are disordered; sequence PAVKGAVGPTAEEEERNPRARSAKLRAGIRTENPPLEDDLSLFGLPKLPETNELARS.

The protein belongs to the methyltransferase superfamily. RsmH family.

It is found in the cytoplasm. It carries out the reaction cytidine(1402) in 16S rRNA + S-adenosyl-L-methionine = N(4)-methylcytidine(1402) in 16S rRNA + S-adenosyl-L-homocysteine + H(+). Functionally, specifically methylates the N4 position of cytidine in position 1402 (C1402) of 16S rRNA. The protein is Ribosomal RNA small subunit methyltransferase H of Brucella anthropi (strain ATCC 49188 / DSM 6882 / CCUG 24695 / JCM 21032 / LMG 3331 / NBRC 15819 / NCTC 12168 / Alc 37) (Ochrobactrum anthropi).